We begin with the raw amino-acid sequence, 978 residues long: Serine/threonine-protein kinase PLK4 (978 aa).

A Protein kinase domain is found at 13–266 (FQVLDLLGKG…LSGILDHPFI (254 aa)). Residues 19-27 (LGKGGFACV) and lysine 42 each bind ATP. Aspartate 137 acts as the Proton acceptor in catalysis. Polar residues-rich tracts occupy residues 271–282 (LNTKYSSPTRQH) and 291–304 (SLDS…TIST). Disordered stretches follow at residues 271–381 (LNTK…TRTS), 489–578 (IEQP…AERL), 788–818 (AWKN…SSPS), and 838–869 (AQTT…QPIP). The segment covering 324 to 335 (RTSDIWPRDPKH) has biased composition (basic and acidic residues). 2 stretches are compositionally biased toward polar residues: residues 351-362 (TENVTTGSSSHV) and 371-381 (AQYSGLKTRTS). 2 stretches are compositionally biased toward basic and acidic residues: residues 518-527 (GSDSVSKDFD) and 536-566 (ESRR…DKSL). A Cryptic POLO box 1 (CPB1) domain is found at 565-678 (SLGELTEPLN…AKFVQLVRKL (114 aa)). The Cryptic POLO box 2 (CPB2) domain maps to 679–792 (TPKVTLYSKH…GRRPPAWKNS (114 aa)). Residues 801–818 (QQGCSNGQSQPVLPSSPS) show a composition bias toward polar residues. Residues 848-862 (KSRKTSPSKTSRHKQ) are compositionally biased toward basic residues. One can recognise a POLO box domain in the interval 895–973 (HVCKMAFVDG…LPAVIKTLAT (79 aa)).

This sequence belongs to the protein kinase superfamily. Ser/Thr protein kinase family. CDC5/Polo subfamily. In terms of assembly, homodimer. In terms of processing, ubiquitinated; leading to its degradation by the proteasome.

The protein localises to the cytoplasm. Its subcellular location is the cytoskeleton. It is found in the microtubule organizing center. It localises to the centrosome. The protein resides in the centriole. The catalysed reaction is L-seryl-[protein] + ATP = O-phospho-L-seryl-[protein] + ADP + H(+). It catalyses the reaction L-threonyl-[protein] + ATP = O-phospho-L-threonyl-[protein] + ADP + H(+). Functionally, serine/threonine-protein kinase that plays a central role in centriole duplication. Able to trigger procentriole formation on the surface of the mother centriole cylinder, leading to the recruitment of centriole biogenesis proteins. When overexpressed, it is able to induce centrosome amplification through the simultaneous generation of multiple procentrioles adjoining each parental centriole during S phase. This chain is Serine/threonine-protein kinase PLK4, found in Nematostella vectensis (Starlet sea anemone).